The chain runs to 422 residues: Serine hydroxymethyltransferase (422 aa).

Residues Leu118 and 122 to 124 (GHL) each bind (6S)-5,6,7,8-tetrahydrofolate. Position 227 is an N6-(pyridoxal phosphate)lysine (Lys227). (6S)-5,6,7,8-tetrahydrofolate contacts are provided by residues Glu243 and 351–353 (SPF).

The protein belongs to the SHMT family. In terms of assembly, homodimer. It depends on pyridoxal 5'-phosphate as a cofactor.

It localises to the cytoplasm. It carries out the reaction (6R)-5,10-methylene-5,6,7,8-tetrahydrofolate + glycine + H2O = (6S)-5,6,7,8-tetrahydrofolate + L-serine. Its pathway is one-carbon metabolism; tetrahydrofolate interconversion. It participates in amino-acid biosynthesis; glycine biosynthesis; glycine from L-serine: step 1/1. Catalyzes the reversible interconversion of serine and glycine with tetrahydrofolate (THF) serving as the one-carbon carrier. This reaction serves as the major source of one-carbon groups required for the biosynthesis of purines, thymidylate, methionine, and other important biomolecules. Also exhibits THF-independent aldolase activity toward beta-hydroxyamino acids, producing glycine and aldehydes, via a retro-aldol mechanism. The protein is Serine hydroxymethyltransferase of Fervidobacterium nodosum (strain ATCC 35602 / DSM 5306 / Rt17-B1).